We begin with the raw amino-acid sequence, 753 residues long: 5-methyltetrahydropteroyltriglutamate--homocysteine methyltransferase (753 aa).

Residues 17–20 (RELK) and K117 each bind 5-methyltetrahydropteroyltri-L-glutamate. L-homocysteine is bound by residues 431-433 (IGS) and E484. L-methionine is bound by residues 431 to 433 (IGS) and E484. Residues 515-516 (RC) and W561 each bind 5-methyltetrahydropteroyltri-L-glutamate. D599 provides a ligand contact to L-homocysteine. D599 contacts L-methionine. E605 is a binding site for 5-methyltetrahydropteroyltri-L-glutamate. 3 residues coordinate Zn(2+): H641, C643, and E665. Catalysis depends on H694, which acts as the Proton donor. C726 is a binding site for Zn(2+).

This sequence belongs to the vitamin-B12 independent methionine synthase family. Requires Zn(2+) as cofactor.

It catalyses the reaction 5-methyltetrahydropteroyltri-L-glutamate + L-homocysteine = tetrahydropteroyltri-L-glutamate + L-methionine. It participates in amino-acid biosynthesis; L-methionine biosynthesis via de novo pathway; L-methionine from L-homocysteine (MetE route): step 1/1. Functionally, catalyzes the transfer of a methyl group from 5-methyltetrahydrofolate to homocysteine resulting in methionine formation. The protein is 5-methyltetrahydropteroyltriglutamate--homocysteine methyltransferase of Shigella boydii serotype 18 (strain CDC 3083-94 / BS512).